A 220-amino-acid chain; its full sequence is Deoxyribose-phosphate aldolase 2 (220 aa).

The Proton donor/acceptor role is filled by D89. K151 acts as the Schiff-base intermediate with acetaldehyde in catalysis. The Proton donor/acceptor role is filled by K180.

This sequence belongs to the DeoC/FbaB aldolase family. DeoC type 1 subfamily.

The protein localises to the cytoplasm. The enzyme catalyses 2-deoxy-D-ribose 5-phosphate = D-glyceraldehyde 3-phosphate + acetaldehyde. Its pathway is carbohydrate degradation; 2-deoxy-D-ribose 1-phosphate degradation; D-glyceraldehyde 3-phosphate and acetaldehyde from 2-deoxy-alpha-D-ribose 1-phosphate: step 2/2. Functionally, catalyzes a reversible aldol reaction between acetaldehyde and D-glyceraldehyde 3-phosphate to generate 2-deoxy-D-ribose 5-phosphate. This is Deoxyribose-phosphate aldolase 2 from Staphylococcus aureus (strain MSSA476).